The chain runs to 279 residues: Acetylglutamate kinase (279 aa).

Substrate contacts are provided by residues 64–65, Arg86, and Asn177; that span reads GG.

The protein belongs to the acetylglutamate kinase family. ArgB subfamily.

The protein localises to the cytoplasm. The enzyme catalyses N-acetyl-L-glutamate + ATP = N-acetyl-L-glutamyl 5-phosphate + ADP. It functions in the pathway amino-acid biosynthesis; L-arginine biosynthesis; N(2)-acetyl-L-ornithine from L-glutamate: step 2/4. Functionally, catalyzes the ATP-dependent phosphorylation of N-acetyl-L-glutamate. The sequence is that of Acetylglutamate kinase from Campylobacter jejuni subsp. jejuni serotype O:23/36 (strain 81-176).